The primary structure comprises 872 residues: Alanine--tRNA ligase (872 aa).

4 residues coordinate Zn(2+): His-567, His-571, Cys-669, and His-673.

Belongs to the class-II aminoacyl-tRNA synthetase family. It depends on Zn(2+) as a cofactor.

The protein resides in the cytoplasm. It catalyses the reaction tRNA(Ala) + L-alanine + ATP = L-alanyl-tRNA(Ala) + AMP + diphosphate. Functionally, catalyzes the attachment of alanine to tRNA(Ala) in a two-step reaction: alanine is first activated by ATP to form Ala-AMP and then transferred to the acceptor end of tRNA(Ala). Also edits incorrectly charged Ser-tRNA(Ala) and Gly-tRNA(Ala) via its editing domain. This chain is Alanine--tRNA ligase, found in Streptococcus pyogenes serotype M1.